We begin with the raw amino-acid sequence, 147 residues long: Small ribosomal subunit protein uS12 (147 aa).

The protein belongs to the universal ribosomal protein uS12 family. Part of the 30S ribosomal subunit.

In terms of biological role, with S4 and S5 plays an important role in translational accuracy. Located at the interface of the 30S and 50S subunits. The protein is Small ribosomal subunit protein uS12 of Pyrococcus horikoshii (strain ATCC 700860 / DSM 12428 / JCM 9974 / NBRC 100139 / OT-3).